Reading from the N-terminus, the 431-residue chain is Chorismate synthase 2, chloroplastic (431 aa).

The N-terminal 48 residues, 1–48 (MASSMLTKQFLGAPFSSFGSGQQPSKLCSSNLRFPTHRSQPKRLEIQA), are a transit peptide targeting the chloroplast. The disordered stretch occupies residues 93 to 141 (DRRRPGQSRITTPRKETDTCKISSGTADGLTTGSPIKVEVPNTDQRGND). Positions 112–126 (CKISSGTADGLTTGS) are enriched in polar residues.

This sequence belongs to the chorismate synthase family. In terms of assembly, homotetramer. It depends on FMNH2 as a cofactor. In terms of tissue distribution, predominantly expressed in flowers and roots and, to a lesser extent, in stems, leaves, and cotyledons.

The protein localises to the plastid. Its subcellular location is the chloroplast. The catalysed reaction is 5-O-(1-carboxyvinyl)-3-phosphoshikimate = chorismate + phosphate. It functions in the pathway metabolic intermediate biosynthesis; chorismate biosynthesis; chorismate from D-erythrose 4-phosphate and phosphoenolpyruvate: step 7/7. In terms of biological role, catalyzes the last common step of the biosynthesis of aromatic amino acids, produced via the shikimic acid pathway. This is Chorismate synthase 2, chloroplastic (CS2) from Solanum lycopersicum (Tomato).